The primary structure comprises 258 residues: Short-chain dehydrogenase/reductase aba4 (258 aa).

I20, D66, and K130 together coordinate NADP(+). Residues S146 and Y160 each act as proton donor in the active site. 4 residues coordinate NADP(+): Y160, K164, I193, and T195. Residue K164 is the Lowers pKa of active site Tyr of the active site.

The protein belongs to the short-chain dehydrogenases/reductases (SDR) family.

Its pathway is hormone biosynthesis. Short-chain dehydrogenase/reductase; part of the gene cluster that mediates the biosynthesis of abscisic acid (ABA), a phytohormone that acts antagonistically toward salicylic acid (SA), jasmonic acid (JA) and ethylene (ETH) signaling, to impede plant defense responses. The first step of the pathway catalyzes the reaction from farnesyl diphosphate to alpha-ionylideneethane performed by the alpha-ionylideneethane synthase aba3 via a three-step reaction mechanism involving 2 neutral intermediates, beta-farnesene and allofarnesene. The cytochrome P450 monooxygenase aba1 might then be involved in the conversion of alpha-ionylideneethane to alpha-ionylideneacetic acid. Alpha-ionylideneacetic acid is further converted to abscisic acid in 2 steps involving the cytochrome P450 monooxygenase aba2 and the short-chain dehydrogenase/reductase aba4, via the intermediates 1'-deoxy-ABA or 1',4'-trans-diol-ABA, depending on the order of action of these 2 enzymes. Aba2 is responsible for the hydroxylation of carbon atom C-1' and aba4 might be involved in the oxidation of the C-4' carbon atom. The sequence is that of Short-chain dehydrogenase/reductase aba4 from Botryotinia fuckeliana (strain B05.10) (Noble rot fungus).